The primary structure comprises 236 residues: Cancer/testis antigen 55 (236 aa).

Positions 57 to 84 (RSSADVETGDNPLKAEPNLPAAVEEQSP) are disordered.

In terms of assembly, interacts with GABARAP; this interaction may be important for GABARAP protein stability. Interacts with LAMP2; this interaction may be important for LAMP2 protein stability. Expressed in spermatozoa (at protein level).

The protein localises to the cytoplasm. It localises to the cytoplasmic vesicle. It is found in the secretory vesicle. Its subcellular location is the acrosome. The protein resides in the cell projection. The protein localises to the cilium. It localises to the flagellum. Its function is as follows. Plays a role in spermatogenesis, possibly acting in the regulation of the autophagy pathway. The polypeptide is Cancer/testis antigen 55 (Ct55) (Mus musculus (Mouse)).